Consider the following 350-residue polypeptide: Biotin synthase (350 aa).

The 219-residue stretch at 38–256 (NYVQVSTLLS…IAIARIMMPQ (219 aa)) folds into the Radical SAM core domain. Residues C53, C57, and C60 each contribute to the [4Fe-4S] cluster site. Residues C97, C128, C188, and R260 each contribute to the [2Fe-2S] cluster site.

It belongs to the radical SAM superfamily. Biotin synthase family. As to quaternary structure, homodimer. The cofactor is [4Fe-4S] cluster. [2Fe-2S] cluster is required as a cofactor.

The catalysed reaction is (4R,5S)-dethiobiotin + (sulfur carrier)-SH + 2 reduced [2Fe-2S]-[ferredoxin] + 2 S-adenosyl-L-methionine = (sulfur carrier)-H + biotin + 2 5'-deoxyadenosine + 2 L-methionine + 2 oxidized [2Fe-2S]-[ferredoxin]. The protein operates within cofactor biosynthesis; biotin biosynthesis; biotin from 7,8-diaminononanoate: step 2/2. Catalyzes the conversion of dethiobiotin (DTB) to biotin by the insertion of a sulfur atom into dethiobiotin via a radical-based mechanism. This Vibrio campbellii (strain ATCC BAA-1116) protein is Biotin synthase.